Consider the following 151-residue polypeptide: Zinc finger HIT domain-containing protein 3 (151 aa).

Positions 11, 14, 22, 25, 30, 34, 38, and 42 each coordinate Zn(2+). Residues 11–42 (CVVCLEKPKYRCPTCRVPYCSVPCFQKHKEQC) form an HIT-type zinc finger. A compositionally biased stretch (basic and acidic residues) spans 43-53 (SSEARPVEKRR). The segment at 43-81 (SSEARPVEKRRAGPPVRSEESKDDDSSVADFLNSDEEED) is disordered. The span at 63–81 (SKDDDSSVADFLNSDEEED) shows a compositional bias: acidic residues. At S76 the chain carries Phosphoserine.

In terms of assembly, thyroid receptor interacting proteins (TRIPs) specifically interact with the ligand binding domain of the thyroid receptor (TR). Requires the presence of thyroid hormone for its interaction. Interacts with NUFIP1. Interacts (via HIT-type zinc finger) with the RUVBL1/RUVBL2 complex in the presence of ADP. As to expression, expressed in the cerebellum.

The protein resides in the cytoplasm. It is found in the nucleus. The sequence is that of Zinc finger HIT domain-containing protein 3 (Znhit3) from Mus musculus (Mouse).